The chain runs to 754 residues: 1,4-alpha-glucan branching enzyme GlgB (754 aa).

D431 (nucleophile) is an active-site residue. E484 serves as the catalytic Proton donor.

This sequence belongs to the glycosyl hydrolase 13 family. GlgB subfamily. In terms of assembly, monomer.

It catalyses the reaction Transfers a segment of a (1-&gt;4)-alpha-D-glucan chain to a primary hydroxy group in a similar glucan chain.. The protein operates within glycan biosynthesis; glycogen biosynthesis. In terms of biological role, catalyzes the formation of the alpha-1,6-glucosidic linkages in glycogen by scission of a 1,4-alpha-linked oligosaccharide from growing alpha-1,4-glucan chains and the subsequent attachment of the oligosaccharide to the alpha-1,6 position. In Prochlorococcus marinus (strain MIT 9301), this protein is 1,4-alpha-glucan branching enzyme GlgB.